Consider the following 204-residue polypeptide: Ribonuclease HII (204 aa).

Residues 1–197 (MILGIDEAGR…KNCILNPKLL (197 aa)) enclose the RNase H type-2 domain. A divalent metal cation-binding residues include Asp6, Glu7, and Asp103.

This sequence belongs to the RNase HII family. It depends on Mn(2+) as a cofactor. Mg(2+) is required as a cofactor.

It localises to the cytoplasm. It carries out the reaction Endonucleolytic cleavage to 5'-phosphomonoester.. Endonuclease that specifically degrades the RNA of RNA-DNA hybrids. This chain is Ribonuclease HII, found in Helicobacter pylori (strain P12).